We begin with the raw amino-acid sequence, 475 residues long: MKHSHEEIRKIIPEMRRVQQIHFIGIGGAGMSGIAEILLNEGYQISGSDIADGVVTQRLAQAGAKIYIGHAAEHIKGASVVVVSSAIKDDNPELVASKQKRIPVIQRAQMLAEIMRFRHGIAVAGTHGKTTTTAMISMIYTQAKLDPTFVNGGLVKSAGKNAHLGASRYLIAEADESDASFLHLQPMVSVVTNMEPDHMDTYEGDFEKMKATYVKFLHNLPFYGLAVMCADDPVLMELVPKVGRQVITYGFSEQADYRIEDYEQTGFQGHYTVFCPNNERINVLLNVPGKHNALNATAALAVAKEEGIANEAILEALADFQGAGRRFDQLGEFIRPNGKVRLVDDYGHHPTEVDVTIKAAREGWGDKRIVMIFQPHRYSRTRDLFDDFVQVLSLVDALIMLDVYAAGEAPIVGADSKSLCRSIRNLGKVDPILVSDTSQLGDVLDQIIQDGDLILAQGAGSVSKISRGLAESWKN.

An ATP-binding site is contributed by 125–131 (GTHGKTT).

It belongs to the MurCDEF family.

The protein localises to the cytoplasm. The enzyme catalyses UDP-N-acetyl-alpha-D-muramate + L-alanine + ATP = UDP-N-acetyl-alpha-D-muramoyl-L-alanine + ADP + phosphate + H(+). The protein operates within cell wall biogenesis; peptidoglycan biosynthesis. Functionally, cell wall formation. The polypeptide is UDP-N-acetylmuramate--L-alanine ligase (Haemophilus influenzae (strain PittGG)).